Reading from the N-terminus, the 165-residue chain is SsrA-binding protein (165 aa).

A compositionally biased stretch (basic and acidic residues) spans 135 to 158 (QAHDKRQDMARRDAQREVTRELGR). Residues 135 to 165 (QAHDKRQDMARRDAQREVTRELGRRVKGMTS) form a disordered region.

It belongs to the SmpB family.

The protein resides in the cytoplasm. Its function is as follows. Required for rescue of stalled ribosomes mediated by trans-translation. Binds to transfer-messenger RNA (tmRNA), required for stable association of tmRNA with ribosomes. tmRNA and SmpB together mimic tRNA shape, replacing the anticodon stem-loop with SmpB. tmRNA is encoded by the ssrA gene; the 2 termini fold to resemble tRNA(Ala) and it encodes a 'tag peptide', a short internal open reading frame. During trans-translation Ala-aminoacylated tmRNA acts like a tRNA, entering the A-site of stalled ribosomes, displacing the stalled mRNA. The ribosome then switches to translate the ORF on the tmRNA; the nascent peptide is terminated with the 'tag peptide' encoded by the tmRNA and targeted for degradation. The ribosome is freed to recommence translation, which seems to be the essential function of trans-translation. This is SsrA-binding protein from Mycolicibacterium vanbaalenii (strain DSM 7251 / JCM 13017 / BCRC 16820 / KCTC 9966 / NRRL B-24157 / PYR-1) (Mycobacterium vanbaalenii).